Here is a 93-residue protein sequence, read N- to C-terminus: YcgL domain-containing protein Shal_1837 (93 aa).

One can recognise a YcgL domain in the interval M1–K85.

This Shewanella halifaxensis (strain HAW-EB4) protein is YcgL domain-containing protein Shal_1837.